The following is a 214-amino-acid chain: ATP phosphoribosyltransferase (214 aa).

Belongs to the ATP phosphoribosyltransferase family. Short subfamily. Heteromultimer composed of HisG and HisZ subunits.

The protein localises to the cytoplasm. It catalyses the reaction 1-(5-phospho-beta-D-ribosyl)-ATP + diphosphate = 5-phospho-alpha-D-ribose 1-diphosphate + ATP. It participates in amino-acid biosynthesis; L-histidine biosynthesis; L-histidine from 5-phospho-alpha-D-ribose 1-diphosphate: step 1/9. Its function is as follows. Catalyzes the condensation of ATP and 5-phosphoribose 1-diphosphate to form N'-(5'-phosphoribosyl)-ATP (PR-ATP). Has a crucial role in the pathway because the rate of histidine biosynthesis seems to be controlled primarily by regulation of HisG enzymatic activity. In Nostoc punctiforme (strain ATCC 29133 / PCC 73102), this protein is ATP phosphoribosyltransferase.